Reading from the N-terminus, the 157-residue chain is Protein FAM219A (157 aa).

Residue M1 is modified to N-acetylmethionine. The tract at residues 1 to 103 is disordered; sequence MMEEIDRFQD…SRYSSSGYSS (103 aa). Residues 17–33 are compositionally biased toward basic and acidic residues; sequence SDRDCDAREEKQRELAR. The span at 38 to 52 shows a compositional bias: polar residues; sequence KNGSMGSPVNQQPKK. Phosphoserine is present on residues S44 and S74. A Phosphothreonine modification is found at T85. Phosphoserine occurs at positions 87 and 94. Residues 94 to 103 show a composition bias toward low complexity; sequence SRYSSSGYSS.

Belongs to the FAM219 family.

The protein is Protein FAM219A (Fam219a) of Mus musculus (Mouse).